A 550-amino-acid chain; its full sequence is MISDNVKKGVIRTPNRALLKACGYTDEDMEKPFIGIVNSFTEVVPGHIHLRTLSEAAKHGVYANGGTPFEFNTIGICDGIAMGHEGMKYSLPSREIIADAVESMARAHGFDGLVLIPTCDKIVPGMIMGALRLNIPFIVVTGGPMLPGEFQGKKYELISLFEGVGEYQVGKITEEELKCIEDCACSGAGSCAGLYTANSMACLTEALGLSLPMCATTHAVDAQKVRLAKKSGSKIVDMVKEDLKPTDILTKEAFENAILVDLALGGSTNTTLHIPAIANEIENKFITLDDFDRLSDEVPHIASIKPGGEHYMIDLHNAGGIPAVLNVLKEKIRDTKTVDGRSILEIAESVKYINYDVIRKVEAPVHETAGLRVLKGNLAPNGCVVKIGAVHPKMYKHDGPAKVYNSEDEAISAILGGKIVEGDVIVIRYEGPSGGPGMREMLSPTSAICGMGLDDSVALITDGRFSGGSRGPCIGHVSPEAAAGGVIAAIENGDIIKIDMIEKEINVDLDESVIKERLSKLGEFEPKIKKGYLSRYSKLVSSADEGAVLK.

Asp78 contributes to the Mg(2+) binding site. [2Fe-2S] cluster is bound at residue Cys119. Residues Asp120 and Lys121 each coordinate Mg(2+). An N6-carboxylysine modification is found at Lys121. Residue Cys191 coordinates [2Fe-2S] cluster. Glu440 contacts Mg(2+). Catalysis depends on Ser466, which acts as the Proton acceptor.

Belongs to the IlvD/Edd family. Homodimer. [2Fe-2S] cluster is required as a cofactor. Requires Mg(2+) as cofactor.

The catalysed reaction is (2R)-2,3-dihydroxy-3-methylbutanoate = 3-methyl-2-oxobutanoate + H2O. The enzyme catalyses (2R,3R)-2,3-dihydroxy-3-methylpentanoate = (S)-3-methyl-2-oxopentanoate + H2O. It participates in amino-acid biosynthesis; L-isoleucine biosynthesis; L-isoleucine from 2-oxobutanoate: step 3/4. The protein operates within amino-acid biosynthesis; L-valine biosynthesis; L-valine from pyruvate: step 3/4. Functions in the biosynthesis of branched-chain amino acids. Catalyzes the dehydration of (2R,3R)-2,3-dihydroxy-3-methylpentanoate (2,3-dihydroxy-3-methylvalerate) into 2-oxo-3-methylpentanoate (2-oxo-3-methylvalerate) and of (2R)-2,3-dihydroxy-3-methylbutanoate (2,3-dihydroxyisovalerate) into 2-oxo-3-methylbutanoate (2-oxoisovalerate), the penultimate precursor to L-isoleucine and L-valine, respectively. The protein is Dihydroxy-acid dehydratase of Methanococcus maripaludis (strain DSM 14266 / JCM 13030 / NBRC 101832 / S2 / LL).